A 635-amino-acid chain; its full sequence is Probable serine/threonine-protein kinase DDB_G0270146 (635 aa).

The Protein kinase domain occupies 77 to 329 (VISDIAIGKG…AKELLSHPWI (253 aa)). Residues 83–91 (IGKGAFATV) and K106 each bind ATP. D199 serves as the catalytic Proton acceptor. Low complexity predominate over residues 360–392 (SLLSNSSGGDDSVTDSDLSISNQSSRSSSFLLD). The interval 360–405 (SLLSNSSGGDDSVTDSDLSISNQSSRSSSFLLDDGGGGGGSKNHTV) is disordered. Coiled-coil stretches lie at residues 417-456 (IEFN…KYRE) and 536-585 (KKAL…KDSS). The span at 540–582 (EAQKRREKEQEKLKEQEKLKEKKKEKDIKKEKDKKDKKDKQLK) shows a compositional bias: basic and acidic residues. Residues 540-635 (EAQKRREKEQ…GRSSSKIFNE (96 aa)) form a disordered region. Residues 583-598 (DSSSSTTTTNSTPSTP) show a composition bias toward low complexity. A compositionally biased stretch (polar residues) spans 626 to 635 (GRSSSKIFNE).

This sequence belongs to the protein kinase superfamily. STE Ser/Thr protein kinase family. Mg(2+) serves as cofactor.

It carries out the reaction L-seryl-[protein] + ATP = O-phospho-L-seryl-[protein] + ADP + H(+). The catalysed reaction is L-threonyl-[protein] + ATP = O-phospho-L-threonyl-[protein] + ADP + H(+). The sequence is that of Probable serine/threonine-protein kinase DDB_G0270146 from Dictyostelium discoideum (Social amoeba).